The chain runs to 126 residues: MAFYEHVVIARQDISPQQAEALNEQLKALIEENGGHIAKIEYWGLRNLTYRIKKNRKGHYSLLAIDAPAPAVKEMERQLLINEDVLRFMTIRVEELDLELSPVLARRDRGDRPERPREDFGAQAQA.

Residues 104 to 126 (LARRDRGDRPERPREDFGAQAQA) form a disordered region. Basic and acidic residues predominate over residues 105-120 (ARRDRGDRPERPREDF).

The protein belongs to the bacterial ribosomal protein bS6 family.

Its function is as follows. Binds together with bS18 to 16S ribosomal RNA. This chain is Small ribosomal subunit protein bS6, found in Caulobacter vibrioides (strain ATCC 19089 / CIP 103742 / CB 15) (Caulobacter crescentus).